Reading from the N-terminus, the 447-residue chain is Phosphoglucosamine mutase (447 aa).

Ser104 serves as the catalytic Phosphoserine intermediate. Residues Ser104, Asp243, Asp245, and Asp247 each contribute to the Mg(2+) site. Ser104 carries the phosphoserine modification.

This sequence belongs to the phosphohexose mutase family. Mg(2+) serves as cofactor. Post-translationally, activated by phosphorylation.

The enzyme catalyses alpha-D-glucosamine 1-phosphate = D-glucosamine 6-phosphate. Catalyzes the conversion of glucosamine-6-phosphate to glucosamine-1-phosphate. The polypeptide is Phosphoglucosamine mutase (Corynebacterium jeikeium (strain K411)).